The sequence spans 72 residues: Translation initiation factor IF-1 (72 aa).

Residues 1-72 (MAKEEVLEFP…TKGRITYRFK (72 aa)) form the S1-like domain.

The protein belongs to the IF-1 family. Component of the 30S ribosomal translation pre-initiation complex which assembles on the 30S ribosome in the order IF-2 and IF-3, IF-1 and N-formylmethionyl-tRNA(fMet); mRNA recruitment can occur at any time during PIC assembly.

Its subcellular location is the cytoplasm. Functionally, one of the essential components for the initiation of protein synthesis. Stabilizes the binding of IF-2 and IF-3 on the 30S subunit to which N-formylmethionyl-tRNA(fMet) subsequently binds. Helps modulate mRNA selection, yielding the 30S pre-initiation complex (PIC). Upon addition of the 50S ribosomal subunit IF-1, IF-2 and IF-3 are released leaving the mature 70S translation initiation complex. This Sinorhizobium medicae (strain WSM419) (Ensifer medicae) protein is Translation initiation factor IF-1.